Consider the following 245-residue polypeptide: Triosephosphate isomerase (245 aa).

9 to 11 is a binding site for substrate; the sequence is NWK. Catalysis depends on H92, which acts as the Electrophile. The active-site Proton acceptor is E164. Residues G170, S209, and 230–231 each bind substrate; that span reads GG.

The protein belongs to the triosephosphate isomerase family. Homodimer.

The protein localises to the cytoplasm. The enzyme catalyses D-glyceraldehyde 3-phosphate = dihydroxyacetone phosphate. The protein operates within carbohydrate biosynthesis; gluconeogenesis. It functions in the pathway carbohydrate degradation; glycolysis; D-glyceraldehyde 3-phosphate from glycerone phosphate: step 1/1. Involved in the gluconeogenesis. Catalyzes stereospecifically the conversion of dihydroxyacetone phosphate (DHAP) to D-glyceraldehyde-3-phosphate (G3P). This chain is Triosephosphate isomerase, found in Cupriavidus pinatubonensis (strain JMP 134 / LMG 1197) (Cupriavidus necator (strain JMP 134)).